Reading from the N-terminus, the 1481-residue chain is Cystic fibrosis transmembrane conductance regulator (1481 aa).

Residues 1–77 (MQKSPLEKAG…KLINALRRCF (77 aa)) lie on the Cytoplasmic side of the membrane. Residues 78-98 (FWRFMFYGILLYLGEVTKAVQ) traverse the membrane as a helical segment. The region spanning 81–365 (FMFYGILLYL…WAVQTWYDSL (285 aa)) is the ABC transmembrane type-1 1 domain. Over 99-122 (PLLLGRIIASYDPDNKVERSIAIY) the chain is Extracellular. Residues 123-146 (LGIGLCLLFVVRTLLLHPAIFGLH) traverse the membrane as a helical segment. The Cytoplasmic portion of the chain corresponds to 147–195 (HIGMQMRIAMFSLIYKKTLKLSSRVLDKISIGQLISLLSNNLNKFDEGL). Residues 196-216 (ALAHFVWISPLQVTLLMGLLW) form a helical membrane-spanning segment. The Extracellular segment spans residues 217-222 (ELLQAS). A helical membrane pass occupies residues 223–243 (AFCGLAFLIVLALVQAGLGRM). Topologically, residues 244 to 298 (MMKYRDQRAGKINERLVITSEMIENIQSVKAYCWEEAMEKMIENLRQTELKLTRK) are cytoplasmic. A helical membrane pass occupies residues 299–319 (AAYVRYFNSSAFFFSGFFVVF). The Extracellular portion of the chain corresponds to 320–339 (LSVLPYALTKGIILRKIFTT). The chain crosses the membrane as a helical span at residues 340 to 358 (ISFCIVLRMAVTRQFPWAV). The Cytoplasmic portion of the chain corresponds to 359-858 (QTWYDSLGAI…YLRYITVHRS (500 aa)). ATP-binding positions include W401, S434, 458–465 (GSTGAGKT), and Q493. The region spanning 423–646 (NGDNNLFFSN…RPDFSSKLMG (224 aa)) is the ABC transporter 1 domain. C524 carries S-palmitoyl cysteine lipidation. Phosphoserine is present on residues S549 and S660. Residues 654–831 (SAERRNSILT…EEINEEDLKE (178 aa)) form a disordered R region region. S670 is subject to Phosphoserine; by PKA. S686 carries the post-translational modification Phosphoserine. K688 participates in a covalent cross-link: Glycyl lysine isopeptide (Lys-Gly) (interchain with G-Cter in ubiquitin). A phosphoserine mark is found at S700 and S712. Residue T717 is modified to Phosphothreonine. 5 positions are modified to phosphoserine: S737, S768, S790, S795, and S813. Residues 859 to 879 (LIFVLIWCIVIFLAEVAASLV) traverse the membrane as a helical segment. Residues 859–1155 (LIFVLIWCIV…AVNSSIDVDS (297 aa)) enclose the ABC transmembrane type-1 2 domain. The Extracellular portion of the chain corresponds to 880–918 (VLWLFGNTAPQDKENSTKSGNSSYAVIITNTSSYYFFYI). N-linked (GlcNAc...) asparagine glycans are attached at residues N894, N900, and N909. Residues 919–939 (YVGVADTLLALGLFRGLPLVH) traverse the membrane as a discontinuously helical segment. The Cytoplasmic segment spans residues 940-990 (TLITVSKILHHKMLHSVLQAPMSTLNTLKAGGILNRFSKDIAILDDLLPLT). Residues 991–1011 (IFDFIQLLLIVVGAIAVVSVL) traverse the membrane as a helical segment. Over 1012-1013 (QP) the chain is Extracellular. The chain crosses the membrane as a helical span at residues 1014 to 1034 (YIFLATVPVIAAFILLRAYFL). Over 1035–1095 (HTSQQLKQLE…TANWFLYLST (61 aa)) the chain is Cytoplasmic. A helical membrane pass occupies residues 1096–1116 (LRWFQMRIEMIFVLFFIAVAF). At 1117–1130 (ISILTTGEGEGRVG) the chain is on the extracellular side. The helical transmembrane segment at 1131-1151 (IILTLAMNIMSTLQWAVNSSI) threads the bilayer. Over 1152 to 1481 (DVDSLMRSVS…AEEEVQGTRL (330 aa)) the chain is Cytoplasmic. Residues 1199–1444 (VKKDDVWPSG…KSLFRQAISS (246 aa)) enclose the ABC transporter 2 domain. ATP contacts are provided by residues Y1220 and 1245-1252 (GRTGSGKS). The interval 1387–1481 (RTLKQAFADC…AEEEVQGTRL (95 aa)) is interaction with GORASP2. Residue C1396 is the site of S-palmitoyl cysteine attachment. Residues S1445 and S1457 each carry the phosphoserine modification. Positions 1449-1481 (KLFPHRNSSKHKSRPQITALKEEAEEEVQGTRL) are disordered. Residues 1450-1462 (LFPHRNSSKHKSR) show a composition bias toward basic residues. Residues 1471–1481 (EAEEEVQGTRL) are compositionally biased toward acidic residues. A PDZ-binding motif is present at residues 1479–1481 (TRL).

The protein belongs to the ABC transporter superfamily. ABCC family. CFTR transporter (TC 3.A.1.202) subfamily. Monomer; does not require oligomerization for channel activity. May form oligomers in the membrane. Interacts with SLC26A3, SLC26A6 and NHERF1. Interacts with SHANK2. Interacts with MYO6. Interacts (via C-terminus) with GOPC (via PDZ domain); this promotes CFTR internalization and thereby decreases channel activity. Interacts with SLC4A7 through NHERF1. Found in a complex with MYO5B and RAB11A. Interacts with ANO1. Interacts with SLC26A8. Interacts with AHCYL1; the interaction increases CFTR activity. Interacts with CSE1L. The core-glycosylated form interacts with GORASP2 (via PDZ GRASP-type 1 domain) in respone to ER stress. Interacts with MARCHF2; the interaction leads to CFTR ubiqtuitination and degradation. Interacts with ADGRG2. N-glycosylated. In terms of processing, phosphorylated; cAMP treatment promotes phosphorylation and activates the channel. Dephosphorylation decreases the ATPase activity (in vitro). Phosphorylation at PKA sites activates the channel. Phosphorylation at PKC sites enhances the response to phosphorylation by PKA. Phosphorylated by AMPK; this inhibits channel activity. Post-translationally, ubiquitinated, leading to its degradation in the lysosome. Deubiquitination by USP10 in early endosomes enhances its endocytic recycling to the cell membrane. Ubiquitinated by RNF185 during ER stress. Ubiquitinated by MARCHF2. Isoform 1 is expressed in the pancreas. Isoform 2 is specifically expressed in the ventricle.

Its subcellular location is the apical cell membrane. The protein localises to the early endosome membrane. The protein resides in the cell membrane. It is found in the recycling endosome membrane. It localises to the endoplasmic reticulum membrane. Its subcellular location is the nucleus. It catalyses the reaction ATP + H2O + closed Cl(-) channel = ADP + phosphate + open Cl(-) channel.. The enzyme catalyses chloride(in) = chloride(out). It carries out the reaction hydrogencarbonate(in) = hydrogencarbonate(out). The catalysed reaction is ATP + H2O = ADP + phosphate + H(+). Epithelial ion channel that plays an important role in the regulation of epithelial ion and water transport and fluid homeostasis. Mediates the transport of chloride ions across the cell membrane. Possesses an intrinsic ATPase activity and utilizes ATP to gate its channel; the passive flow of anions through the channel is gated by cycles of ATP binding and hydrolysis by the ATP-binding domains. The ion channel is also permeable to HCO(3)(-); selectivity depends on the extracellular chloride concentration. Exerts its function also by modulating the activity of other ion channels and transporters. Contributes to the regulation of the pH and the ion content of the epithelial fluid layer. Modulates the activity of the epithelial sodium channel (ENaC) complex, in part by regulating the cell surface expression of the ENaC complex. May regulate bicarbonate secretion and salvage in epithelial cells by regulating the transporter SLC4A7. Can inhibit the chloride channel activity of ANO1. Plays a role in the chloride and bicarbonate homeostasis during sperm epididymal maturation and capacitation. The protein is Cystic fibrosis transmembrane conductance regulator of Oryctolagus cuniculus (Rabbit).